Reading from the N-terminus, the 238-residue chain is Probable 2-phosphosulfolactate phosphatase (238 aa).

It belongs to the ComB family. It depends on Mg(2+) as a cofactor.

The enzyme catalyses (2R)-O-phospho-3-sulfolactate + H2O = (2R)-3-sulfolactate + phosphate. This chain is Probable 2-phosphosulfolactate phosphatase, found in Clostridium beijerinckii (strain ATCC 51743 / NCIMB 8052) (Clostridium acetobutylicum).